Here is a 249-residue protein sequence, read N- to C-terminus: Small ribosomal subunit protein uS3 (249 aa).

Residues 39 to 108 (IRQLINKKLA…TVAVNVAEIP (70 aa)) form the KH type-2 domain. Residues 214–249 (ETFARPQRRDRDERRPEGGDRPARRRPTARRRTGGE) form a disordered region. Basic and acidic residues predominate over residues 220 to 235 (QRRDRDERRPEGGDRP). Basic residues predominate over residues 236–249 (ARRRPTARRRTGGE).

It belongs to the universal ribosomal protein uS3 family. In terms of assembly, part of the 30S ribosomal subunit. Forms a tight complex with proteins S10 and S14.

Functionally, binds the lower part of the 30S subunit head. Binds mRNA in the 70S ribosome, positioning it for translation. The sequence is that of Small ribosomal subunit protein uS3 from Deinococcus radiodurans (strain ATCC 13939 / DSM 20539 / JCM 16871 / CCUG 27074 / LMG 4051 / NBRC 15346 / NCIMB 9279 / VKM B-1422 / R1).